Reading from the N-terminus, the 107-residue chain is Ferredoxin (107 aa).

2 consecutive 4Fe-4S ferredoxin-type domains span residues 2 to 30 and 31 to 60; these read TYVV…YEGE and FMLV…PETP. Positions 9 and 17 each coordinate [3Fe-4S] cluster. [4Fe-4S] cluster contacts are provided by Cys21, Cys40, Cys43, and Cys46. Cys50 is a [3Fe-4S] cluster binding site.

Requires [4Fe-4S] cluster as cofactor. [3Fe-4S] cluster is required as a cofactor.

Its function is as follows. Ferredoxins are iron-sulfur proteins that transfer electrons in a wide variety of metabolic reactions. The polypeptide is Ferredoxin (fdxA) (Rickettsia bellii (strain RML369-C)).